A 316-amino-acid chain; its full sequence is MRLETQALVPYPVRFDRSHHDALVVLGATATGKTALAVALAQKYQGEIISADSRQVYRGLDVGTGKDLALYGSVPYHLIDVCDPYEEYNVFRFQQAVYGIVPSILRAHKVPIIVGGTGLYLDAVLRQYALVPVERNQALRASLRGASLSHMRAVYFSLKDSHAVHNKTDLEDPARLMRAIEIAVFHATHPELLQQARETRPMMRAKVYGIQYPRSMLRARIRARLEQRIRGGLIEEVAALHKGGVSWQRLEYFGLEYRFTAQYLQGIIATRDEYVDLLFRAISRFAKRQETWFRRMQRLGVKIHWLVHTENGFVLR.

G27–T34 is a binding site for ATP. Residue T29–T34 coordinates substrate. The interval D52–Q55 is interaction with substrate tRNA.

This sequence belongs to the IPP transferase family. As to quaternary structure, monomer. It depends on Mg(2+) as a cofactor.

It catalyses the reaction adenosine(37) in tRNA + dimethylallyl diphosphate = N(6)-dimethylallyladenosine(37) in tRNA + diphosphate. Catalyzes the transfer of a dimethylallyl group onto the adenine at position 37 in tRNAs that read codons beginning with uridine, leading to the formation of N6-(dimethylallyl)adenosine (i(6)A). The polypeptide is tRNA dimethylallyltransferase (Treponema pallidum (strain Nichols)).